The primary structure comprises 20 residues: Cytosol aminopeptidase (20 aa).

Residue serine 6 is modified to Phosphoserine.

The protein belongs to the peptidase M17 family. Homohexamer. It depends on Zn(2+) as a cofactor. Mn(2+) is required as a cofactor.

The protein localises to the cytoplasm. It carries out the reaction Release of an N-terminal amino acid, Xaa-|-Yaa-, in which Xaa is preferably Leu, but may be other amino acids including Pro although not Arg or Lys, and Yaa may be Pro. Amino acid amides and methyl esters are also readily hydrolyzed, but rates on arylamides are exceedingly low.. The enzyme catalyses an S-substituted L-cysteinylglycine + H2O = an S-substituted L-cysteine + glycine. The catalysed reaction is L-cysteinylglycine + H2O = L-cysteine + glycine. It catalyses the reaction S-benzyl-L-cysteinylglycine + H2O = S-benzyl-L-cysteine + glycine. It carries out the reaction Release of N-terminal proline from a peptide.. Functionally, cytosolic metallopeptidase that catalyzes the removal of unsubstituted N-terminal hydrophobic amino acids from various peptides. The presence of Zn(2+) ions is essential for the peptidase activity, and the association with other cofactors can modulate the substrate spectificity of the enzyme. For instance, in the presence of Mn(2+), it displays a specific Cys-Gly hydrolyzing activity of Cys-Gly-S-conjugates. Involved in the metabolism of glutathione and in the degradation of glutathione S-conjugates, which may play a role in the control of the cell redox status. The polypeptide is Cytosol aminopeptidase (Mesocricetus auratus (Golden hamster)).